Reading from the N-terminus, the 207-residue chain is Peptidyl-tRNA hydrolase (207 aa).

Residue Tyr14 participates in tRNA binding. Residue His19 is the Proton acceptor of the active site. Positions 64, 66, and 112 each coordinate tRNA.

Belongs to the PTH family. As to quaternary structure, monomer.

The protein resides in the cytoplasm. The catalysed reaction is an N-acyl-L-alpha-aminoacyl-tRNA + H2O = an N-acyl-L-amino acid + a tRNA + H(+). Functionally, hydrolyzes ribosome-free peptidyl-tRNAs (with 1 or more amino acids incorporated), which drop off the ribosome during protein synthesis, or as a result of ribosome stalling. In terms of biological role, catalyzes the release of premature peptidyl moieties from peptidyl-tRNA molecules trapped in stalled 50S ribosomal subunits, and thus maintains levels of free tRNAs and 50S ribosomes. This is Peptidyl-tRNA hydrolase from Rhodopseudomonas palustris (strain BisB5).